The chain runs to 510 residues: MIPSYVPPKYKVEVDPNRCMLCERCTIECSWGVYRREGDRIISYSNRCGACHRCVVMCPRDAITIKENAISWRSHPLWDVDARVDIYNQAKTGCILLSGMGNAKEHPIYFDKIVLDACQVTNPSIDPLREPMELRTYIGKKPKQLEFEFVEEEIDGKKIKKAKLKTKIAPNLKLDTPIMIAHMSYGALSLNAHLSFAKAVKECGTFMGTGEGGLPKALYPYADHIITQVASGRFGVNEEYLMKGSAIEIKIGQGAKPGIGGHLPGEKVTAEISATRMIPEGSDAISPAPHHDIYSIEDLAQLVRSLKEATRWKKPVFVKIAAVHNAPAIAVGIATSDADAVVIDGYKGGTGAAPKVFRDHVGIPIEMAIAAVDQRLREEGLRNEISIIASGGIRCSADVFKAIALGADAVYIGTAAMVALGCRVCGRCYTGLCAWGIATQRPELVKRLDPEVGARRVANLIKAWTHEIKELLGAAGINSIESLRGNRDRLRGVGLNEKELEVLGIKAAGE.

4Fe-4S ferredoxin-type domains lie at 10 to 37 and 38 to 68; these read YKVE…YRRE and GDRI…IKEN. [4Fe-4S] cluster contacts are provided by Cys19, Cys22, Cys25, Cys29, Cys48, Cys51, Cys54, and Cys58.

It belongs to the glutamate synthase family. FMN serves as cofactor.

The enzyme catalyses 2 L-glutamate + NADP(+) = L-glutamine + 2-oxoglutarate + NADPH + H(+). This Methanocaldococcus jannaschii (strain ATCC 43067 / DSM 2661 / JAL-1 / JCM 10045 / NBRC 100440) (Methanococcus jannaschii) protein is Archaeal glutamate synthase [NADPH].